The primary structure comprises 463 residues: Phosphoglucosamine mutase (463 aa).

Ser108 acts as the Phosphoserine intermediate in catalysis. Mg(2+) contacts are provided by Ser108, Asp247, Asp249, and Asp251. Phosphoserine is present on Ser108.

Belongs to the phosphohexose mutase family. The cofactor is Mg(2+). Post-translationally, activated by phosphorylation.

It carries out the reaction alpha-D-glucosamine 1-phosphate = D-glucosamine 6-phosphate. In terms of biological role, catalyzes the conversion of glucosamine-6-phosphate to glucosamine-1-phosphate. This Nitrosospira multiformis (strain ATCC 25196 / NCIMB 11849 / C 71) protein is Phosphoglucosamine mutase.